The primary structure comprises 147 residues: UPF0178 protein CV_1768 (147 aa).

It belongs to the UPF0178 family.

The chain is UPF0178 protein CV_1768 from Chromobacterium violaceum (strain ATCC 12472 / DSM 30191 / JCM 1249 / CCUG 213 / NBRC 12614 / NCIMB 9131 / NCTC 9757 / MK).